The primary structure comprises 2376 residues: Protein Ycf2 (2376 aa).

Disordered stretches follow at residues 173–194, 226–256, and 952–1011; these read SSQLKGSSDQSRDHFDSIGTED, TEIESDRFSKGLSGSSSKSRLFTEGEKEMNN, and KRKK…KRKE. The span at 235–245 shows a compositional bias: low complexity; that stretch reads KGLSGSSSKSR. Basic and acidic residues-rich tracts occupy residues 246 to 255 and 960 to 1009; these read LFTEGEKEMN and KRKE…PEKR. 1441–1448 lines the ATP pocket; that stretch reads GSIGSGRS. Disordered stretches follow at residues 1515-1534, 1860-2046, and 2112-2230; these read YEDRDSDDYDEPGASDDYEP, LVGS…LRPK, and PAEE…DGFS. The segment covering 1866-2025 has biased composition (acidic residues); it reads TEEEVEGTEE…GEGTEDEEGE (160 aa). Residues 2026–2038 show a composition bias toward basic and acidic residues; the sequence is GTEKDSSQFDNDR. Composition is skewed to acidic residues over residues 2112–2129 and 2136–2213; these read PAEEIPEEEDPLPEEALE and GEEE…ENDS.

This sequence belongs to the Ycf2 family.

Its subcellular location is the plastid. It is found in the chloroplast stroma. Its function is as follows. Probable ATPase of unknown function. Its presence in a non-photosynthetic plant (Epifagus virginiana) and experiments in tobacco indicate that it has an essential function which is probably not related to photosynthesis. The sequence is that of Protein Ycf2 from Oenothera glazioviana (Large-flowered evening primrose).